The primary structure comprises 316 residues: Melanocyte-stimulating hormone receptor (316 aa).

The Extracellular portion of the chain corresponds to M1–E37. A glycan (N-linked (GlcNAc...) asparagine) is linked at N29. Residues V38–I63 traverse the membrane as a helical segment. Residues A64–S72 lie on the Cytoplasmic side of the membrane. A helical membrane pass occupies residues M73 to L93. Topologically, residues E94–N118 are extracellular. A helical transmembrane segment spans residues T119–V140. Topologically, residues D141–R163 are cytoplasmic. A helical transmembrane segment spans residues A164–Y183. The Extracellular segment spans residues D184–C191. The chain crosses the membrane as a helical span at residues L192–L211. At A212–A240 the chain is on the cytoplasmic side. The chain crosses the membrane as a helical span at residues A241 to F266. Residues C267–N279 lie on the Extracellular side of the membrane. A helical transmembrane segment spans residues F280–F300. Topologically, residues R301 to W316 are cytoplasmic. Residue C314 is the site of S-palmitoyl cysteine attachment.

Belongs to the G-protein coupled receptor 1 family. Interacts with MGRN1, but does not undergo MGRN1-mediated ubiquitination; this interaction competes with GNAS-binding and thus inhibits agonist-induced cAMP production. Interacts with OPN3; the interaction results in a decrease in MC1R-mediated cAMP signaling and ultimately a decrease in melanin production in melanocytes.

It is found in the cell membrane. Functionally, receptor for MSH (alpha, beta and gamma) and ACTH. The activity of this receptor is mediated by G proteins which activate adenylate cyclase. Mediates melanogenesis, the production of eumelanin (black/brown) and phaeomelanin (red/yellow), via regulation of cAMP signaling in melanocytes. The protein is Melanocyte-stimulating hormone receptor (MC1R) of Saguinus geoffroyi (Geoffroy's tamarin).